Here is a 302-residue protein sequence, read N- to C-terminus: UTP--glucose-1-phosphate uridylyltransferase (302 aa).

The protein belongs to the UDPGP type 2 family. Homotetramer or homopentamer. The cofactor is Mg(2+).

It carries out the reaction alpha-D-glucose 1-phosphate + UTP + H(+) = UDP-alpha-D-glucose + diphosphate. May play a role in stationary phase survival. This is UTP--glucose-1-phosphate uridylyltransferase (galU) from Escherichia coli O157:H7.